A 120-amino-acid polypeptide reads, in one-letter code: Adenosylhomocysteinase (120 aa).

Asn-34 contacts NAD(+).

This sequence belongs to the adenosylhomocysteinase family. Requires NAD(+) as cofactor.

Its subcellular location is the cytoplasm. The catalysed reaction is S-adenosyl-L-homocysteine + H2O = L-homocysteine + adenosine. Its pathway is amino-acid biosynthesis; L-homocysteine biosynthesis; L-homocysteine from S-adenosyl-L-homocysteine: step 1/1. May play a key role in the regulation of the intracellular concentration of adenosylhomocysteine. The polypeptide is Adenosylhomocysteinase (ahcY) (Streptomyces fradiae (Streptomyces roseoflavus)).